The chain runs to 240 residues: Vacuolar-sorting protein SNF7 (240 aa).

Position 72 is a phosphothreonine (Thr72). Phosphoserine occurs at positions 119 and 193. Residues Ser193–Leu240 form a disordered region. Positions Asn195–Asn212 are enriched in polar residues. Residues Gly217–Glu228 are compositionally biased toward acidic residues. A Glycyl lysine isopeptide (Lys-Gly) (interchain with G-Cter in ubiquitin) cross-link involves residue Lys229. The segment covering Lys229–Leu240 has biased composition (basic and acidic residues).

The protein belongs to the SNF7 family. Core component of the ESCRT-III complex (endosomal sorting required for transport complex III). ESCRT-III appears to be sequentially assembled as a flat lattice on the endosome membrane and forms a transient 450 kDa complex that contains DID4, oligomerized SNF7, VPS20 and VPS24. SNF7 polymerizes into spirals at the surface of lipid bilayers. SNF7 polymerization is nucleated by association of SNF7 with VPS20; the process is terminated through association of VPS24, possibly by capping the SNF7 filament. Interacts with VTA1; the interaction requires DID2. Interacts with BRO1. Interacts with DOA4. Interacts with HEH1 and HEH2. Interacts with RIM20 and YGR122W.

It localises to the cytoplasm. The protein localises to the endosome membrane. Its subcellular location is the nucleus envelope. In terms of biological role, acts a component of the ESCRT-III complex required for the sorting and concentration of proteins resulting in the entry of these proteins into the invaginating vesicles of the multivesicular body (MVB). The sequential action of ESCRT-0, -I, and -II together with the ordered assembly of ESCRT-III links membrane invagination to cargo sorting. Membrane scission in the neck of the growing vesicle releases mature, cargo-laden ILVs into the lumen. ESCRT-III is critical for late steps in MVB sorting, such as membrane invagination and final cargo sorting and recruitment of late-acting components of the sorting machinery. SNF7 is the most abundant ESCRT-III subunit which forms membrane-sculpting filaments with 30 Angstrom periodicity and a exposed cationic membrane-binding surface. Its activation requires a prominent conformational rearrangement to expose protein-membrane and protein-protein interfaces. SNF7 filaments then form spirals that could function as spiral springs. The elastic expansion of compressed SNF7 spirals generates an area difference between the two sides of the membrane and thus curvature which could be the origin of membrane deformation leading eventually to fission. SNF7 recruits BRO1, which in turn recruits DOA4, which deubiquitinates cargos before their enclosure within MVB vesicles. ESCRT-III is also recruited to the nuclear envelope (NE) by integral INM proteins to surveil and clear defective nuclear pore complex (NPC) assembly intermediates to ensure the fidelity of NPC assembly. In Saccharomyces cerevisiae (strain ATCC 204508 / S288c) (Baker's yeast), this protein is Vacuolar-sorting protein SNF7.